Reading from the N-terminus, the 292-residue chain is Polyisoprenoid diphosphate/phosphate phosphohydrolase PLPP6 (292 aa).

2 disordered regions span residues 1–34 (MPSP…SGGG) and 66–86 (GSFP…PPED). Over 1–131 (MPSPRRTIEG…SAWGSVRPLM (131 aa)) the chain is Cytoplasmic. Over residues 10 to 25 (GRPLGSSGGSSVPGSP) the composition is skewed to low complexity. Phosphoserine is present on residues Ser24 and Ser67. Over residues 69–79 (PLAASGPAQAA) the composition is skewed to low complexity. The helical transmembrane segment at 132–152 (KLLEISGHGIPWLLGTLYCLL) threads the bilayer. Residues 153 to 161 (RSDSWAGRE) lie on the Lumenal side of the membrane. A helical membrane pass occupies residues 162 to 182 (VLMNLLFALLLDLLLVAVIKG). Positions 181–189 (KGLVRRRRP) are phosphatase sequence motif I. The Cytoplasmic segment spans residues 183–225 (LVRRRRPAHNQKDMFFTLSVDRYSFPSGHATRAALVSRFILNH). The segment at 208 to 211 (PSGH) is phosphatase sequence motif II. Residue His211 is the Proton donors of the active site. A helical membrane pass occupies residues 226–246 (LVLAIPLRVLVVLWAFVLGLS). Residues 246–257 (SRVMLGRHNVTD) form a phosphatase sequence motif III region. The Lumenal segment spans residues 247 to 257 (RVMLGRHNVTD). The active-site Nucleophile is the His253. A helical membrane pass occupies residues 258–278 (VAFGFFLGYMQYSIVDYCWLS). Topologically, residues 279–292 (PHNVPVLFVLWNQQ) are cytoplasmic.

It belongs to the PA-phosphatase related phosphoesterase family. Phosphorylation by PKC activates the phosphatase activity towards presqualene diphosphate.

Its subcellular location is the endoplasmic reticulum membrane. The protein localises to the nucleus envelope. It is found in the nucleus inner membrane. It catalyses the reaction presqualene diphosphate + H2O = presqualene phosphate + phosphate + H(+). It carries out the reaction presqualene phosphate + H2O = presqualene alcohol + phosphate. The enzyme catalyses (2E,6E)-farnesyl diphosphate + H2O = (2E,6E)-farnesyl phosphate + phosphate + H(+). The catalysed reaction is (2E,6E)-farnesyl phosphate + H2O = (2E,6E)-farnesol + phosphate. It catalyses the reaction (2E,6E,10E)-geranylgeranyl diphosphate + H2O = (2E,6E,10E)-geranylgeranyl phosphate + phosphate + H(+). It carries out the reaction (2E,6E,10E)-geranylgeranyl phosphate + H2O = (2E,6E,10E)-geranylgeraniol + phosphate. The enzyme catalyses (2E)-geranyl diphosphate + H2O = (2E)-geranyl phosphate + phosphate + H(+). The catalysed reaction is (2E)-geranyl phosphate + H2O = (2E)-geraniol + phosphate. It catalyses the reaction 1,2-dihexadecanoyl-sn-glycero-3-phosphate + H2O = 1,2-dihexadecanoyl-sn-glycerol + phosphate. In terms of biological role, magnesium-independent polyisoprenoid diphosphatase that catalyzes the sequential dephosphorylation of presqualene, farnesyl, geranyl and geranylgeranyl diphosphates. Functions in the innate immune response through the dephosphorylation of presqualene diphosphate which acts as a potent inhibitor of the signaling pathways contributing to polymorphonuclear neutrophils activation. May regulate the biosynthesis of cholesterol and related sterols by dephosphorylating presqualene and farnesyl diphosphate, two key intermediates in this biosynthetic pathway. May also play a role in protein prenylation by acting on farnesyl diphosphate and its derivative geranylgeranyl diphosphate, two precursors for the addition of isoprenoid anchors to membrane proteins. Has a lower activity towards phosphatidic acid (PA), but through phosphatidic acid dephosphorylation may participate in the biosynthesis of phospholipids and triacylglycerols. May also act on ceramide-1-P, lysophosphatidic acid (LPA) and sphing-4-enine 1-phosphate/sphingosine-1-phosphate. This is Polyisoprenoid diphosphate/phosphate phosphohydrolase PLPP6 from Mus musculus (Mouse).